Reading from the N-terminus, the 241-residue chain is 2,3,4,5-tetrahydropyridine-2,6-dicarboxylate N-acetyltransferase (241 aa).

The protein belongs to the transferase hexapeptide repeat family. DapH subfamily.

The catalysed reaction is (S)-2,3,4,5-tetrahydrodipicolinate + acetyl-CoA + H2O = L-2-acetamido-6-oxoheptanedioate + CoA. Its pathway is amino-acid biosynthesis; L-lysine biosynthesis via DAP pathway; LL-2,6-diaminopimelate from (S)-tetrahydrodipicolinate (acetylase route): step 1/3. Catalyzes the transfer of an acetyl group from acetyl-CoA to tetrahydrodipicolinate. The chain is 2,3,4,5-tetrahydropyridine-2,6-dicarboxylate N-acetyltransferase from Caldanaerobacter subterraneus subsp. tengcongensis (strain DSM 15242 / JCM 11007 / NBRC 100824 / MB4) (Thermoanaerobacter tengcongensis).